The following is a 91-amino-acid chain: Small ribosomal subunit protein bS20 (91 aa).

Belongs to the bacterial ribosomal protein bS20 family.

Binds directly to 16S ribosomal RNA. In Wolinella succinogenes (strain ATCC 29543 / DSM 1740 / CCUG 13145 / JCM 31913 / LMG 7466 / NCTC 11488 / FDC 602W) (Vibrio succinogenes), this protein is Small ribosomal subunit protein bS20.